The chain runs to 158 residues: Peptide methionine sulfoxide reductase MsrA (158 aa).

Residue Cys10 is part of the active site.

It belongs to the MsrA Met sulfoxide reductase family.

The enzyme catalyses L-methionyl-[protein] + [thioredoxin]-disulfide + H2O = L-methionyl-(S)-S-oxide-[protein] + [thioredoxin]-dithiol. It catalyses the reaction [thioredoxin]-disulfide + L-methionine + H2O = L-methionine (S)-S-oxide + [thioredoxin]-dithiol. Its function is as follows. Has an important function as a repair enzyme for proteins that have been inactivated by oxidation. Catalyzes the reversible oxidation-reduction of methionine sulfoxide in proteins to methionine. The chain is Peptide methionine sulfoxide reductase MsrA from Alkaliphilus metalliredigens (strain QYMF).